The following is a 77-amino-acid chain: Translation initiation factor IF-1, chloroplastic (77 aa).

One can recognise an S1-like domain in the interval 1 to 71 (MKEQKLIHEG…TRGRIIYRLR (71 aa)).

Belongs to the IF-1 family. Component of the 30S ribosomal translation pre-initiation complex which assembles on the 30S ribosome in the order IF-2 and IF-3, IF-1 and N-formylmethionyl-tRNA(fMet); mRNA recruitment can occur at any time during PIC assembly.

The protein resides in the plastid. Its subcellular location is the chloroplast. In terms of biological role, one of the essential components for the initiation of protein synthesis. Stabilizes the binding of IF-2 and IF-3 on the 30S subunit to which N-formylmethionyl-tRNA(fMet) subsequently binds. Helps modulate mRNA selection, yielding the 30S pre-initiation complex (PIC). Upon addition of the 50S ribosomal subunit IF-1, IF-2 and IF-3 are released leaving the mature 70S translation initiation complex. This Asarum canadense (Wild ginger) protein is Translation initiation factor IF-1, chloroplastic.